The chain runs to 254 residues: 5'-nucleotidase SurE (254 aa).

A divalent metal cation contacts are provided by aspartate 8, aspartate 9, serine 38, and asparagine 91.

The protein belongs to the SurE nucleotidase family. A divalent metal cation serves as cofactor.

It localises to the cytoplasm. It carries out the reaction a ribonucleoside 5'-phosphate + H2O = a ribonucleoside + phosphate. In terms of biological role, nucleotidase that shows phosphatase activity on nucleoside 5'-monophosphates. This chain is 5'-nucleotidase SurE, found in Anaeromyxobacter sp. (strain Fw109-5).